The sequence spans 207 residues: Urease accessory protein UreG (207 aa).

Position 14 to 21 (14 to 21 (GPVGSGKT)) interacts with GTP.

It belongs to the SIMIBI class G3E GTPase family. UreG subfamily. As to quaternary structure, homodimer. UreD, UreF and UreG form a complex that acts as a GTP-hydrolysis-dependent molecular chaperone, activating the urease apoprotein by helping to assemble the nickel containing metallocenter of UreC. The UreE protein probably delivers the nickel.

The protein resides in the cytoplasm. Its function is as follows. Facilitates the functional incorporation of the urease nickel metallocenter. This process requires GTP hydrolysis, probably effectuated by UreG. The sequence is that of Urease accessory protein UreG from Tolumonas auensis (strain DSM 9187 / NBRC 110442 / TA 4).